The sequence spans 721 residues: BBSome complex member bbs-7 (721 aa).

As to quaternary structure, part of BBSome complex, that contains at least bbs-1, bbs-2, bbs-4, bbs-5, osm-12, bbs-8/ttc-8 and bbs-9. Interacts with bbs-1. Expressed in ciliated cells including amphid and both inner and outer labial neurons of the head and in both phasmid neurons PHA and PHB in the tail at larval stages L1 and L2.

The protein localises to the cell projection. Its subcellular location is the cilium. It localises to the cytoplasm. The protein resides in the cytoskeleton. It is found in the cilium basal body. The protein localises to the cilium axoneme. Its function is as follows. Component of the BBSome complex. The BBSome complex is thought to function as a coat complex required for sorting of specific membrane proteins to the primary cilia. The BBSome complex is required for ciliogenesis but is dispensable for centriolar satellite function. Required for proper BBSome complex assembly and its ciliary localization. Required for cilia biogenesis and both the assembly and movement of intraflagellar transport proteins along the ciliary axoneme. Plays a role in the removal of degraded mechanosensory receptors within the cilia. Plays a role in guanylyl cyclase localization in the ring-like structures at the base of the finger compartment in AFD sensory neurons. In ciliated sensory neurons, required for the sensation of nitric oxide and avoidance of NO-producing organisms like P.aeruginosa. In Caenorhabditis elegans, this protein is BBSome complex member bbs-7.